The primary structure comprises 160 residues: SsrA-binding protein (160 aa).

It belongs to the SmpB family.

The protein localises to the cytoplasm. Functionally, required for rescue of stalled ribosomes mediated by trans-translation. Binds to transfer-messenger RNA (tmRNA), required for stable association of tmRNA with ribosomes. tmRNA and SmpB together mimic tRNA shape, replacing the anticodon stem-loop with SmpB. tmRNA is encoded by the ssrA gene; the 2 termini fold to resemble tRNA(Ala) and it encodes a 'tag peptide', a short internal open reading frame. During trans-translation Ala-aminoacylated tmRNA acts like a tRNA, entering the A-site of stalled ribosomes, displacing the stalled mRNA. The ribosome then switches to translate the ORF on the tmRNA; the nascent peptide is terminated with the 'tag peptide' encoded by the tmRNA and targeted for degradation. The ribosome is freed to recommence translation, which seems to be the essential function of trans-translation. The sequence is that of SsrA-binding protein from Chloroflexus aurantiacus (strain ATCC 29364 / DSM 637 / Y-400-fl).